A 393-amino-acid chain; its full sequence is Elongation factor Tu (393 aa).

In terms of domain architecture, tr-type G spans 10–203 (KPHVNIGTIG…AVDNYIPEPV (194 aa)). The interval 19 to 26 (GHVDHGKT) is G1. GTP is bound at residue 19-26 (GHVDHGKT). Threonine 26 serves as a coordination point for Mg(2+). A G2 region spans residues 60-64 (GITIS). The interval 81-84 (DCPG) is G3. GTP contacts are provided by residues 81–85 (DCPGH) and 136–139 (NKVD). Residues 136-139 (NKVD) are G4. A G5 region spans residues 173 to 175 (SAL).

The protein belongs to the TRAFAC class translation factor GTPase superfamily. Classic translation factor GTPase family. EF-Tu/EF-1A subfamily. As to quaternary structure, monomer.

Its subcellular location is the cytoplasm. The enzyme catalyses GTP + H2O = GDP + phosphate + H(+). Its function is as follows. GTP hydrolase that promotes the GTP-dependent binding of aminoacyl-tRNA to the A-site of ribosomes during protein biosynthesis. The polypeptide is Elongation factor Tu (Chlorobium phaeovibrioides (strain DSM 265 / 1930) (Prosthecochloris vibrioformis (strain DSM 265))).